Reading from the N-terminus, the 90-residue chain is High mobility group nucleosome-binding domain-containing protein 4 (90 aa).

A disordered region spans residues 1 to 90 (MPKRKAKGDA…QKAEGTGDAK (90 aa)). Residues 7 to 23 (KGDAKGDKGKVKDEPQR) are compositionally biased toward basic and acidic residues. Ser-29 carries the ADP-ribosylserine modification. A compositionally biased stretch (basic and acidic residues) spans 37–64 (PEPRPKKAPAKKGEKLAKGRKGKAEVSK). Polar residues predominate over residues 65-83 (DGNNPAKNRDASTVQSQKA). A Phosphoserine modification is found at Ser-80. Lys-82 bears the N6-acetyllysine mark.

The protein belongs to the HMGN family.

The protein resides in the nucleus. In Bos taurus (Bovine), this protein is High mobility group nucleosome-binding domain-containing protein 4 (HMGN4).